Reading from the N-terminus, the 71-residue chain is Exodeoxyribonuclease 7 small subunit (71 aa).

It belongs to the XseB family. As to quaternary structure, heterooligomer composed of large and small subunits.

It localises to the cytoplasm. The catalysed reaction is Exonucleolytic cleavage in either 5'- to 3'- or 3'- to 5'-direction to yield nucleoside 5'-phosphates.. In terms of biological role, bidirectionally degrades single-stranded DNA into large acid-insoluble oligonucleotides, which are then degraded further into small acid-soluble oligonucleotides. The protein is Exodeoxyribonuclease 7 small subunit of Streptococcus equi subsp. equi (strain 4047).